The chain runs to 266 residues: Transcription factor atoh8 (266 aa).

The interval 140–164 is disordered; that stretch reads AASQAPAGGSERAESPRKRAGEPSG. The segment covering 150–160 has biased composition (basic and acidic residues); sequence ERAESPRKRAG. A basic motif; degenerate region spans residues 175–188; that stretch reads TRRLLANARERTRV. Positions 175–227 constitute a bHLH domain; the sequence is TRRLLANARERTRVHTISAAFEALRKQVPCYSYGQKLSKLAILRIACNYILSL. Positions 189–227 are helix-loop-helix motif; sequence HTISAAFEALRKQVPCYSYGQKLSKLAILRIACNYILSL.

The protein localises to the nucleus. The protein resides in the nucleus speckle. It localises to the cytoplasm. Functionally, transcription factor that binds a palindromic (canonical) core consensus DNA sequence 5'-CANNTG- 3' known as an E-box element, possibly as a heterodimer with other bHLH proteins. During development, is required for heart looping and swim bladder formation by acting in concert with GATA4 and ZFPM1. During the development of both the retina and skeletal muscles is required for neural retinal cell through modulating PAX6 and NEUROG3 expression and myogenic differentiation. This chain is Transcription factor atoh8, found in Danio rerio (Zebrafish).